We begin with the raw amino-acid sequence, 225 residues long: Uracil-DNA glycosylase (225 aa).

Asp-65 functions as the Proton acceptor in the catalytic mechanism.

This sequence belongs to the uracil-DNA glycosylase (UDG) superfamily. UNG family.

The protein localises to the cytoplasm. The catalysed reaction is Hydrolyzes single-stranded DNA or mismatched double-stranded DNA and polynucleotides, releasing free uracil.. Functionally, excises uracil residues from the DNA which can arise as a result of misincorporation of dUMP residues by DNA polymerase or due to deamination of cytosine. In Bacillus cereus (strain B4264), this protein is Uracil-DNA glycosylase.